The sequence spans 207 residues: MNITINPMESLVSKPNTSNSIILTNLNDFSNWARLSSLWPLLYGTSCCFIEFASLIGSRFDFDRYGLVPRSSPRQADLIITAGTVTMKMAPSLIRLYEQMPEPKYVIAMGACTITGGMFSTDSYSTVRGVDKLIPVDIYLPGCPPKPEAIIDAVIKLRKKVAQETYKDQKRSIRGNRFFTLKHQFDFVPSIHTGQYTQQLHDKSLSK.

4 residues coordinate [4Fe-4S] cluster: cysteine 47, cysteine 48, cysteine 112, and cysteine 143.

It belongs to the complex I 20 kDa subunit family. As to quaternary structure, NDH is composed of at least 16 different subunits, 5 of which are encoded in the nucleus. [4Fe-4S] cluster serves as cofactor.

It localises to the plastid. The protein localises to the chloroplast thylakoid membrane. The enzyme catalyses a plastoquinone + NADH + (n+1) H(+)(in) = a plastoquinol + NAD(+) + n H(+)(out). It carries out the reaction a plastoquinone + NADPH + (n+1) H(+)(in) = a plastoquinol + NADP(+) + n H(+)(out). Its function is as follows. NDH shuttles electrons from NAD(P)H:plastoquinone, via FMN and iron-sulfur (Fe-S) centers, to quinones in the photosynthetic chain and possibly in a chloroplast respiratory chain. The immediate electron acceptor for the enzyme in this species is believed to be plastoquinone. Couples the redox reaction to proton translocation, and thus conserves the redox energy in a proton gradient. This Psilotum nudum (Whisk fern) protein is NAD(P)H-quinone oxidoreductase subunit K, chloroplastic.